The following is an 80-amino-acid chain: MTIFNTISSISNSTRTTSSSIATCNYNGSMANVNSTACFDNDFGEWGGLGGFNNGCGGGSNVNVINLDIDIGRRHHRRCC.

This sequence belongs to the UPF0512 family.

The chain is UPF0512 protein Q from Dictyostelium discoideum (Social amoeba).